Consider the following 259-residue polypeptide: Global transcriptional regulator CodY (259 aa).

Residues 1 to 155 (MDLLTRTRKI…GATVVGMEIL (155 aa)) are GAF domain. The H-T-H motif DNA-binding region spans 203–222 (ASKIADRVGITRSVIVNALR). Ser215 carries the phosphoserine modification.

This sequence belongs to the CodY family.

It localises to the cytoplasm. DNA-binding global transcriptional regulator which is involved in the adaptive response to starvation and acts by directly or indirectly controlling the expression of numerous genes in response to nutrient availability. During rapid exponential growth, CodY is highly active and represses genes whose products allow adaptation to nutrient depletion. The chain is Global transcriptional regulator CodY from Shouchella clausii (strain KSM-K16) (Alkalihalobacillus clausii).